The primary structure comprises 404 residues: Serine/threonine transporter SstT (404 aa).

A run of 8 helical transmembrane segments spans residues 17–37, 39–59, 75–95, 138–158, 179–199, 212–232, 287–307, and 313–333; these read IGIGVVIGVMLGILAPDLTGF, ILGKLFVGGLKAIAPLLVFAL, MTLIIVLYLFGTFASALVAVL, ALATANYIGVLSWAIIFGLAL, IVVWIINLAPIGIMSLVFTTI, FLILVLVGTMLFVALVVNPLI, IPLGATINMGGAAITINVLTL, and FGIPIDFLTALLLSVVAAVSA.

It belongs to the dicarboxylate/amino acid:cation symporter (DAACS) (TC 2.A.23) family.

It is found in the cell membrane. The enzyme catalyses L-serine(in) + Na(+)(in) = L-serine(out) + Na(+)(out). The catalysed reaction is L-threonine(in) + Na(+)(in) = L-threonine(out) + Na(+)(out). In terms of biological role, involved in the import of serine and threonine into the cell, with the concomitant import of sodium (symport system). The sequence is that of Serine/threonine transporter SstT from Streptococcus pyogenes serotype M1.